The primary structure comprises 62 residues: Large ribosomal subunit protein bL28 (62 aa).

The segment at 1–24 is disordered; it reads MARKCVITGRKTKAGNNRSHAMNS. Positions 14 to 24 are enriched in polar residues; the sequence is AGNNRSHAMNS.

Belongs to the bacterial ribosomal protein bL28 family.

The sequence is that of Large ribosomal subunit protein bL28 from Bacillus pumilus (strain SAFR-032).